The chain runs to 437 residues: Glutamate-1-semialdehyde 2,1-aminomutase (437 aa).

N6-(pyridoxal phosphate)lysine is present on Lys-272.

Belongs to the class-III pyridoxal-phosphate-dependent aminotransferase family. HemL subfamily. Homodimer. The cofactor is pyridoxal 5'-phosphate.

The protein localises to the cytoplasm. It catalyses the reaction (S)-4-amino-5-oxopentanoate = 5-aminolevulinate. The protein operates within porphyrin-containing compound metabolism; protoporphyrin-IX biosynthesis; 5-aminolevulinate from L-glutamyl-tRNA(Glu): step 2/2. This is Glutamate-1-semialdehyde 2,1-aminomutase from Moorella thermoacetica (strain ATCC 39073 / JCM 9320).